The following is a 208-amino-acid chain: Cysteine-rich protein 2 (208 aa).

The LIM zinc-binding 1 domain maps to C5–C57. The residue at position 23 (K23) is an N6-acetyllysine. Residues A98 to F119 are disordered. A Phosphoserine modification is found at S104. The LIM zinc-binding 2 domain maps to C126–C178. N6-acetyllysine is present on residues K138 and K144.

As to quaternary structure, interacts with TGFB1I1. As to expression, widespread tissue expression; highest levels in the heart.

The protein is Cysteine-rich protein 2 (CRIP2) of Homo sapiens (Human).